The sequence spans 542 residues: Putative CTP synthase (542 aa).

The amidoligase domain stretch occupies residues 1 to 277 (MEIDLMKHIQ…HKTILDFFSL (277 aa)). A CTP-binding site is contributed by Ser-23. Ser-23 is a binding site for UTP. Residues 24 to 29 (SLGKGV) and Asp-81 each bind ATP. Residues Asp-81 and Glu-151 each coordinate Mg(2+). Residues 158–160 (DIE), 198–203 (KTKPTQ), and Lys-234 contribute to the CTP site. UTP contacts are provided by residues 198 to 203 (KTKPTQ) and Lys-234. Residues 310–542 (YVELPDAYKS…LKMSLKIKES (233 aa)) enclose the Glutamine amidotransferase type-1 domain. Glu-517 is a catalytic residue.

Belongs to the CTP synthase family. In terms of assembly, homotetramer.

It carries out the reaction UTP + L-glutamine + ATP + H2O = CTP + L-glutamate + ADP + phosphate + 2 H(+). The enzyme catalyses L-glutamine + H2O = L-glutamate + NH4(+). It catalyses the reaction UTP + NH4(+) + ATP = CTP + ADP + phosphate + 2 H(+). Its pathway is pyrimidine metabolism; CTP biosynthesis via de novo pathway; CTP from UDP: step 2/2. Its activity is regulated as follows. Allosterically activated by GTP, when glutamine is the substrate; GTP has no effect on the reaction when ammonia is the substrate. The allosteric effector GTP functions by stabilizing the protein conformation that binds the tetrahedral intermediate(s) formed during glutamine hydrolysis. Inhibited by the product CTP, via allosteric rather than competitive inhibition. Catalyzes the ATP-dependent amination of UTP to CTP with either L-glutamine or ammonia as the source of nitrogen. Regulates intracellular CTP levels through interactions with the four ribonucleotide triphosphates. This Ureaplasma parvum serovar 3 (strain ATCC 700970) protein is Putative CTP synthase.